The following is an 847-amino-acid chain: Alpha-glucuronidase A (847 aa).

An N-terminal signal peptide occupies residues 1 to 22; it reads MRSFLLLTALLGVAAVAEDGLA. N-linked (GlcNAc...) asparagine glycosylation is found at asparagine 48, asparagine 78, asparagine 227, asparagine 315, asparagine 349, asparagine 457, asparagine 472, asparagine 534, asparagine 583, asparagine 689, asparagine 738, asparagine 739, and asparagine 769.

Belongs to the glycosyl hydrolase 67 family.

The protein localises to the secreted. It carries out the reaction an alpha-D-glucuronoside + H2O = D-glucuronate + an alcohol. Its function is as follows. Alpha-glucuronidase involved in the hydrolysis of xylan, a major structural heterogeneous polysaccharide found in plant biomass representing the second most abundant polysaccharide in the biosphere, after cellulose. Releases 4-O-methylglucuronic acid from xylan. In Emericella nidulans (strain FGSC A4 / ATCC 38163 / CBS 112.46 / NRRL 194 / M139) (Aspergillus nidulans), this protein is Alpha-glucuronidase A (aguA).